The chain runs to 74 residues: Large ribosomal subunit protein bL31 (74 aa).

Zn(2+) contacts are provided by Cys-16, Cys-18, Cys-37, and Cys-40.

Belongs to the bacterial ribosomal protein bL31 family. Type A subfamily. As to quaternary structure, part of the 50S ribosomal subunit. Zn(2+) is required as a cofactor.

Its function is as follows. Binds the 23S rRNA. This is Large ribosomal subunit protein bL31 from Koribacter versatilis (strain Ellin345).